Here is a 149-residue protein sequence, read N- to C-terminus: Large ribosomal subunit protein bL9 (149 aa).

The protein belongs to the bacterial ribosomal protein bL9 family.

Binds to the 23S rRNA. This is Large ribosomal subunit protein bL9 from Histophilus somni (strain 129Pt) (Haemophilus somnus).